A 562-amino-acid chain; its full sequence is Protein FAM83D-B (562 aa).

Positions 424 to 472 (ITTQTTETSQCTTQTPAPTSSVARLSNSSNSSSSSFSSASTTSTGSNCS) are disordered. Low complexity predominate over residues 425 to 472 (TTQTTETSQCTTQTPAPTSSVARLSNSSNSSSSSFSSASTTSTGSNCS).

This sequence belongs to the FAM83 family.

The protein resides in the cytoplasm. It is found in the cytoskeleton. Its subcellular location is the spindle. The protein localises to the spindle pole. Its function is as follows. May regulate cell proliferation, growth, migration and epithelial to mesenchymal transition. May also be important for proper chromosome congression and alignment during mitosis. This chain is Protein FAM83D-B, found in Xenopus laevis (African clawed frog).